A 179-amino-acid polypeptide reads, in one-letter code: ATP-dependent protease subunit HslV (179 aa).

The active site involves T6. Positions 164, 167, and 170 each coordinate Na(+).

The protein belongs to the peptidase T1B family. HslV subfamily. In terms of assembly, a double ring-shaped homohexamer of HslV is capped on each side by a ring-shaped HslU homohexamer. The assembly of the HslU/HslV complex is dependent on binding of ATP.

It is found in the cytoplasm. It carries out the reaction ATP-dependent cleavage of peptide bonds with broad specificity.. Allosterically activated by HslU binding. Protease subunit of a proteasome-like degradation complex believed to be a general protein degrading machinery. This Listeria monocytogenes serotype 4b (strain CLIP80459) protein is ATP-dependent protease subunit HslV.